Reading from the N-terminus, the 239-residue chain is Ribonuclease P protein component 3 (239 aa).

This sequence belongs to the eukaryotic/archaeal RNase P protein component 3 family. As to quaternary structure, consists of a catalytic RNA component and at least 4-5 protein subunits.

Its subcellular location is the cytoplasm. The enzyme catalyses Endonucleolytic cleavage of RNA, removing 5'-extranucleotides from tRNA precursor.. Functionally, part of ribonuclease P, a protein complex that generates mature tRNA molecules by cleaving their 5'-ends. In Methanosarcina mazei (strain ATCC BAA-159 / DSM 3647 / Goe1 / Go1 / JCM 11833 / OCM 88) (Methanosarcina frisia), this protein is Ribonuclease P protein component 3.